The chain runs to 37 residues: Alpha-conotoxin TxID (37 aa).

Residues 1-21 (FDGRNAAGNDKMSALMALTTR) constitute a propeptide that is removed on maturation. 2 cysteine pairs are disulfide-bonded: cysteine 23/cysteine 29 and cysteine 24/cysteine 36. The residue at position 36 (cysteine 36) is a Cysteine amide.

Belongs to the conotoxin A superfamily. In terms of processing, unmodified Met-32 is essential for toxin binding to rat alpha-3-beta-4/CHRNA3-CHRNB4 nAChR. An oxidation of this methionine provokes a 13.3-fold decrease in inhibitory potency (IC(50)=245 nM instead of 18 nM). Owing to its potent activity, derivatives of this toxin have a potential in the development of a novel drug. Unfortunately, the oxidation of the methionine is readily to happen during toxin synthesis and oxidation steps as well as under oxidative environment in vivo, which should still be considered to find a solution to this major drawback. Expressed by the venom duct.

It localises to the secreted. Its function is as follows. Alpha-conotoxins act on postsynaptic membranes, they bind to the nicotinic acetylcholine receptors (nAChR) and thus inhibit them. This toxin inhibits alpha-3-beta-4/CHRNA3-CHRNB4 (IC(50)=3.6-18.38 nM), alpha-6/alpha-3-beta-4 (CHRNA6/CHRNA3-CHRNB4) (IC(50)=33.9-94.1 nM), and alpha-2-beta-4/CHRNA2-CHRNB4 (IC(50)=4550 nM) nAChRs. The toxin competes with agonists in the orthosteric binding site of alpha-3-beta-4/CHRNA3-CHRNB4 and alpha-6-beta-4/CHRNA6-CHRNB4. This Conus textile (Cloth-of-gold cone) protein is Alpha-conotoxin TxID.